A 1163-amino-acid polypeptide reads, in one-letter code: Protein phosphatase 1 regulatory subunit 26 (1163 aa).

Basic and acidic residues predominate over residues 65–83 (HERLTQRGQRAERSRDTRL). Disordered regions lie at residues 65–91 (HERLTQRGQRAERSRDTRLAPKPAVCK), 144–253 (RGGA…TSAR), 266–393 (RKPP…KKKL), 463–496 (APMEGSDRPPSRNPLFCPQPMPPRSEGDSSNIDS), 514–653 (VGSP…DEDL), 672–929 (RDPR…TATA), and 1073–1163 (TQPG…GLKL). Polar residues-rich tracts occupy residues 163 to 179 (HSSTLPIPCPSQLTPGS) and 189 to 201 (DQGSTSPASMSSE). The span at 208–236 (IRAEIEQFLNEKRQHENPKCDGFVDKKSD) shows a compositional bias: basic and acidic residues. Polar residues predominate over residues 273–297 (KMSTQQRNFQPKPTTEPETPVSTKL). Residues 315 to 324 (MPARRSKRIR) show a composition bias toward basic residues. Positions 515–535 (GSPQPAQGPLSSPGPSGQPGI) are enriched in low complexity. Basic and acidic residues-rich tracts occupy residues 566-581 (KIREGRESTQDADHIQ) and 634-645 (ATEKESSEDKSS). The segment covering 672-682 (RDPRASCKKVR) has biased composition (basic residues). A compositionally biased stretch (low complexity) spans 766-780 (TGASGHPPSASSPTS). The segment covering 783-792 (SAVDSDDSIE) has biased composition (acidic residues). Basic and acidic residues-rich tracts occupy residues 793–808 (LEIRRFLAEKAKESIR) and 850–859 (EGRRGPERAR). Polar residues predominate over residues 860–871 (TQATGLLSQSGK). The span at 901-910 (SSAKASPPSR) shows a compositional bias: low complexity. Residues 1105–1131 (QQDRRNSASEDKVLDLRYRHRVDREPQ) are compositionally biased toward basic and acidic residues. Ser1111 carries the phosphoserine modification. Polar residues-rich tracts occupy residues 1133–1146 (QETLGSDASEFSDT) and 1154–1163 (ATVSSKGLKL).

As to quaternary structure, interacts with UTP20 and PPP1CA.

It localises to the nucleus. Its subcellular location is the nucleolus. Inhibits phosphatase activity of protein phosphatase 1 (PP1) complexes. May positively regulate cell proliferation. In Mus musculus (Mouse), this protein is Protein phosphatase 1 regulatory subunit 26 (Ppp1r26).